The sequence spans 321 residues: Sphingolipid delta(4)-desaturase DES1 (321 aa).

The next 6 helical transmembrane spans lie at Pro-41–Val-61, Trp-68–Val-88, Ile-107–Tyr-127, Phe-157–Ile-177, Ile-187–Trp-206, and Pro-208–Ile-230.

This sequence belongs to the fatty acid desaturase type 1 family. DEGS subfamily. Testes.

The protein resides in the endoplasmic reticulum membrane. Its subcellular location is the membrane. It is found in the mitochondrion. It catalyses the reaction an N-acylsphinganine + 2 Fe(II)-[cytochrome b5] + O2 + 2 H(+) = an N-acylsphing-4-enine + 2 Fe(III)-[cytochrome b5] + 2 H2O. It carries out the reaction an N-acyleicosasphinganine + 2 Fe(II)-[cytochrome b5] + O2 + 2 H(+) = an N-acyleicosasphing-4-enine + 2 Fe(III)-[cytochrome b5] + 2 H2O. It functions in the pathway sphingolipid metabolism. Functionally, has sphingolipid-delta-4-desaturase activity. Converts sphinganine-containing sphingolipids (such as N-acylsphinganines or dihydroceramides) into sphingolipids containing the delta-4-desaturated sphingoid base (E)-sphing-4-enine (such as N-acylsphing-4-enines or ceramides), which are required for many different functions (structural functions as well as signaling). Required to initiate spermatid differentiation among other signals. Required for central spindle assembly and cytokinesis during male meiosis, may act as part of an anchoring mechanism that links membrane-bounded cellular compartments to components of the cytoskeleton. This chain is Sphingolipid delta(4)-desaturase DES1, found in Drosophila melanogaster (Fruit fly).